The chain runs to 294 residues: Ribosomal protein L11 methyltransferase (294 aa).

4 residues coordinate S-adenosyl-L-methionine: T145, G166, D188, and N230.

This sequence belongs to the methyltransferase superfamily. PrmA family.

Its subcellular location is the cytoplasm. It carries out the reaction L-lysyl-[protein] + 3 S-adenosyl-L-methionine = N(6),N(6),N(6)-trimethyl-L-lysyl-[protein] + 3 S-adenosyl-L-homocysteine + 3 H(+). Its function is as follows. Methylates ribosomal protein L11. The chain is Ribosomal protein L11 methyltransferase from Glaesserella parasuis serovar 5 (strain SH0165) (Haemophilus parasuis).